The sequence spans 481 residues: MDYISTRDASRTPARFSDILLGGLAPDGGLYLPATYPQLDDAQLSKWREVLANEGYAALAAEVISLFVDDIPVEDIKAITARAYTYPKFNSEDIVPVTELEDNIYLGHLSEGPTAAFKDMAMQLLGELFEYELRRRNETINILGATSGDTGSSAEYAMRGREGIRVFMLTPAGRMTPFQQAQMFGLDDPNIFNIALDGVFDDCQDVVKAVSADAEFKKDNRIGAVNSINWARLMAQVVYYVSSWIRTTTSNDQKVSFSVPTGNFGDICAGHIARQMGLPIDRLIVATNENDVLDEFFRTGDYRVRSSADTHETSSPSMDISRASNFERFIFDLLGRDATRVNDLFGTQVRQGGFSLADDANFEKAAAEYGFASGRSTHADRVATIADVHSRLDVLIDPHTADGVHVARQWRDEVNTPIIVLETALPVKFADTIVEAIGEAPQTPERFAAIMDAPFKVSDLPNDTDAVKQYIVDAIANTSVK.

At Lys118 the chain carries N6-(pyridoxal phosphate)lysine.

The protein belongs to the threonine synthase family. In terms of assembly, monomer. It depends on pyridoxal 5'-phosphate as a cofactor.

It catalyses the reaction O-phospho-L-homoserine + H2O = L-threonine + phosphate. It functions in the pathway amino-acid biosynthesis; L-threonine biosynthesis; L-threonine from L-aspartate: step 5/5. Catalyzes the gamma-elimination of phosphate from L-phosphohomoserine and the beta-addition of water to produce L-threonine. The polypeptide is Threonine synthase (thrC) (Corynebacterium glutamicum (strain ATCC 13032 / DSM 20300 / JCM 1318 / BCRC 11384 / CCUG 27702 / LMG 3730 / NBRC 12168 / NCIMB 10025 / NRRL B-2784 / 534)).